The chain runs to 347 residues: FMRFamide-related peptides (347 aa).

The N-terminal stretch at 1–22 (MGIALMFLLALYQMQSAIHSEI) is a signal peptide. Positions 23 to 102 (IDTPNYAGNS…RYKYDPELEA (80 aa)) are excised as a propeptide. Position 114 is a phenylalanine amide (phenylalanine 114). The residue at position 146 (tyrosine 146) is a Tyrosine amide. Phenylalanine 157, phenylalanine 168, phenylalanine 179, phenylalanine 190, phenylalanine 201, phenylalanine 212, phenylalanine 223, and phenylalanine 232 each carry phenylalanine amide. Positions 235–240 (SPHEEL) are excised as a propeptide. A phenylalanine amide mark is found at phenylalanine 250 and phenylalanine 259. Serine amide is present on serine 270. A Phenylalanine amide modification is found at phenylalanine 280. Residues 283 to 347 (SLKPAAPESK…SVEQDQFFGQ (65 aa)) constitute a propeptide that is removed on maturation. A disordered region spans residues 283–347 (SLKPAAPESK…SVEQDQFFGQ (65 aa)). Residues 305–320 (SPVDKAMTELFKKQEL) show a composition bias toward basic and acidic residues. The span at 321–347 (QDQQVKNGAQATTTQDGSVEQDQFFGQ) shows a compositional bias: polar residues.

The protein belongs to the FARP (FMRFamide related peptide) family. Post-translationally, this precursor includes 13 peptides that have FMRF or related sequences at their C-termini, and other putative neuropeptides.

It is found in the secreted. In insects, FMRFamide and related peptides have modulatory actions at skeletal neuromuscular junctions, and peptides that are immunologically related to FMRFamide are released into the circulation from neurohemal organs. The chain is FMRFamide-related peptides from Drosophila melanogaster (Fruit fly).